Here is a 652-residue protein sequence, read N- to C-terminus: DNA ligase (652 aa).

NAD(+) is bound by residues 29 to 33, 78 to 79, and Glu-107; these read DSEYD and SL. Lys-109 acts as the N6-AMP-lysine intermediate in catalysis. NAD(+)-binding residues include Arg-130, Glu-164, Lys-278, and Lys-302. Zn(2+)-binding residues include Cys-395, Cys-398, Cys-413, and Cys-418. The BRCT domain occupies 577 to 652; sequence AADAVLSGKT…IQDEAWLEQL (76 aa).

The protein belongs to the NAD-dependent DNA ligase family. LigA subfamily. Mg(2+) is required as a cofactor. The cofactor is Mn(2+).

It catalyses the reaction NAD(+) + (deoxyribonucleotide)n-3'-hydroxyl + 5'-phospho-(deoxyribonucleotide)m = (deoxyribonucleotide)n+m + AMP + beta-nicotinamide D-nucleotide.. Functionally, DNA ligase that catalyzes the formation of phosphodiester linkages between 5'-phosphoryl and 3'-hydroxyl groups in double-stranded DNA using NAD as a coenzyme and as the energy source for the reaction. It is essential for DNA replication and repair of damaged DNA. This Streptococcus gordonii (strain Challis / ATCC 35105 / BCRC 15272 / CH1 / DL1 / V288) protein is DNA ligase.